Here is a 400-residue protein sequence, read N- to C-terminus: Homoserine O-acetyltransferase (400 aa).

The 310-residue stretch at 64–373 (NAILICHALT…TDRGHDAFLL (310 aa)) folds into the AB hydrolase-1 domain. The Nucleophile role is filled by serine 169. Position 239 (arginine 239) interacts with substrate. Active-site residues include aspartate 335 and histidine 368. Aspartate 369 is a binding site for substrate.

The protein belongs to the AB hydrolase superfamily. MetX family. Homodimer.

It localises to the cytoplasm. It catalyses the reaction L-homoserine + acetyl-CoA = O-acetyl-L-homoserine + CoA. The protein operates within amino-acid biosynthesis; L-methionine biosynthesis via de novo pathway; O-acetyl-L-homoserine from L-homoserine: step 1/1. Functionally, transfers an acetyl group from acetyl-CoA to L-homoserine, forming acetyl-L-homoserine. This Bradyrhizobium diazoefficiens (strain JCM 10833 / BCRC 13528 / IAM 13628 / NBRC 14792 / USDA 110) protein is Homoserine O-acetyltransferase.